The following is a 151-amino-acid chain: Deoxyuridine 5'-triphosphate nucleotidohydrolase (151 aa).

Residues 70–72 (RSG), asparagine 83, and 87–89 (VID) each bind substrate.

This sequence belongs to the dUTPase family. The cofactor is Mg(2+).

The catalysed reaction is dUTP + H2O = dUMP + diphosphate + H(+). The protein operates within pyrimidine metabolism; dUMP biosynthesis; dUMP from dCTP (dUTP route): step 2/2. Its function is as follows. This enzyme is involved in nucleotide metabolism: it produces dUMP, the immediate precursor of thymidine nucleotides and it decreases the intracellular concentration of dUTP so that uracil cannot be incorporated into DNA. This Desulfitobacterium hafniense (strain DSM 10664 / DCB-2) protein is Deoxyuridine 5'-triphosphate nucleotidohydrolase.